The primary structure comprises 307 residues: Oxygen-dependent coproporphyrinogen-III oxidase (307 aa).

Ser-99 serves as a coordination point for substrate. A divalent metal cation is bound by residues His-103 and His-113. Catalysis depends on His-113, which acts as the Proton donor. Residue Asn-115–Arg-117 coordinates substrate. The a divalent metal cation site is built by His-152 and His-182. The tract at residues Tyr-247–Arg-282 is important for dimerization. Gly-265–Arg-267 provides a ligand contact to substrate.

The protein belongs to the aerobic coproporphyrinogen-III oxidase family. As to quaternary structure, homodimer. A divalent metal cation serves as cofactor.

It is found in the cytoplasm. It carries out the reaction coproporphyrinogen III + O2 + 2 H(+) = protoporphyrinogen IX + 2 CO2 + 2 H2O. It participates in porphyrin-containing compound metabolism; protoporphyrin-IX biosynthesis; protoporphyrinogen-IX from coproporphyrinogen-III (O2 route): step 1/1. Involved in the heme biosynthesis. Catalyzes the aerobic oxidative decarboxylation of propionate groups of rings A and B of coproporphyrinogen-III to yield the vinyl groups in protoporphyrinogen-IX. This is Oxygen-dependent coproporphyrinogen-III oxidase from Burkholderia lata (strain ATCC 17760 / DSM 23089 / LMG 22485 / NCIMB 9086 / R18194 / 383).